The following is a 66-amino-acid chain: Scarabaecin (66 aa).

Residues 1–26 (MKTLTFYTLLLCAALYSNFFDCKAVA) form the signal peptide. A disulfide bond links Cys46 and Cys57.

It localises to the secreted. Possesses antifungal activity against phytopathogenic fungi such as P.oryzae, R.solani and B.cinerea but not against phytopathogenic bacteria. Shows weak activity against the insect pathogenic fungus B.bassiana and against S.aureus. Binds chitin. The sequence is that of Scarabaecin from Oryctes rhinoceros (Coconut rhinoceros beetle).